A 480-amino-acid polypeptide reads, in one-letter code: UDP-glucose 6-dehydrogenase 4 (480 aa).

NAD(+)-binding positions include 8–13 (GAGYVG), Asp33, Arg38, 86–90 (VNTPT), 127–128 (ST), and Glu161. Substrate contacts are provided by residues 157–161 (EFLAE), 216–223 (KLAANAFL), and 256–269 (RIGPKFLNASVGFG). Cys272 acts as the Nucleophile in catalysis. An NAD(+)-binding site is contributed by 272-275 (CFQK). Position 334–335 (334–335 (FK)) interacts with substrate. Arg342 lines the NAD(+) pocket. Position 393 is a phosphoserine (Ser393). Position 447 (Arg447) interacts with substrate.

This sequence belongs to the UDP-glucose/GDP-mannose dehydrogenase family.

It catalyses the reaction UDP-alpha-D-glucose + 2 NAD(+) + H2O = UDP-alpha-D-glucuronate + 2 NADH + 3 H(+). Its pathway is nucleotide-sugar biosynthesis; UDP-alpha-D-glucuronate biosynthesis; UDP-alpha-D-glucuronate from UDP-alpha-D-glucose: step 1/1. Involved in the biosynthesis of UDP-glucuronic acid (UDP-GlcA), providing nucleotide sugars for cell-wall polymers. The protein is UDP-glucose 6-dehydrogenase 4 (UGD4) of Oryza sativa subsp. japonica (Rice).